The primary structure comprises 210 residues: Large ribosomal subunit protein uL3 (210 aa).

It belongs to the universal ribosomal protein uL3 family. In terms of assembly, part of the 50S ribosomal subunit. Forms a cluster with proteins L14 and L19.

In terms of biological role, one of the primary rRNA binding proteins, it binds directly near the 3'-end of the 23S rRNA, where it nucleates assembly of the 50S subunit. This chain is Large ribosomal subunit protein uL3, found in Geobacter metallireducens (strain ATCC 53774 / DSM 7210 / GS-15).